Reading from the N-terminus, the 195-residue chain is Recombination protein RecR (195 aa).

The C4-type zinc-finger motif lies at 56-71 (CRQCHSFSDDDICPIC). The 96-residue stretch at 79-174 (SVLCVVETAA…KVTRIAQGIP (96 aa)) folds into the Toprim domain.

Belongs to the RecR family.

May play a role in DNA repair. It seems to be involved in an RecBC-independent recombinational process of DNA repair. It may act with RecF and RecO. The sequence is that of Recombination protein RecR from Psychrobacter sp. (strain PRwf-1).